The primary structure comprises 1006 residues: Transcription factor tau subunit sfc4 (1006 aa).

Residues 64 to 91 (GLWSDEESDYEGSDDESNFSKTASRTED) form a disordered region. Positions 66 to 80 (WSDEESDYEGSDDES) are enriched in acidic residues. TPR repeat units follow at residues 133–166 (QQMLSLANHLFAQEGNFDEAQKLAEEIVRIDNNV), 205–238 (HELWFTCAKLSESLEFWDQADYCYNRAVSAKPPN), 277–310 (ASILKNLAEIYIKIHAPREILKQFEIAWKYFYQY), 396–429 (HLFRTKLGIARLKTGELPEAELHFSVIKNLPPDY), 431–464 (WGMLYDIAKAYMDIERLDLALEYFVLICNHEPAQ), and 466–499 (IGLWYNMGVCYLELKEYEHAQQCMEAILIVDNSN). Positions 506-554 (LAEINELQDNRDAALEIVTNIFEQRRNINELEREQSQNEDHEKNVGSQL) form a coiled coil. TPR repeat units lie at residues 841-874 (PVLVLLYGHIMARNRSWIPAINYYSRAFAINPDC) and 924-957 (QEALYNLGKAYHFIGLEHYAVKYYEAVLGLSPMS).

Component of the TFIIIC complex including sfc1, sfc3, sfc4, sfc6 and sfc7. The subunits are organized in two globular domains, tauA and tauB, connected by a proteolysis-sensitive and flexible linker. Interacts with sfc1, sfc3 and sfc6. Phosphorylated.

It localises to the nucleus. In terms of biological role, TFIIIC mediates tRNA and 5S RNA gene activation by binding to intragenic promoter elements. Upstream of the transcription start site, TFIIIC assembles the initiation complex TFIIIB-TFIIIC-tDNA, which is sufficient for RNA polymerase III recruitment and function. Part of the tauA domain of TFIIIC that binds boxA DNA promoter sites of tRNA and similar genes. Sfc4 is the TFIIIB assembling subunit of TFIIIC. This Schizosaccharomyces pombe (strain 972 / ATCC 24843) (Fission yeast) protein is Transcription factor tau subunit sfc4.